Here is a 1458-residue protein sequence, read N- to C-terminus: ABC multidrug transporter B (1458 aa).

Helical transmembrane passes span phenylalanine 30–isoleucine 50, leucine 70–valine 90, alanine 102–cysteine 122, serine 128–alanine 148, and isoleucine 165–valine 185. A glycan (N-linked (GlcNAc...) asparagine) is linked at asparagine 208. A helical transmembrane segment spans residues tryptophan 273–leucine 295. Positions alanine 283–glycine 561 constitute an ABC transmembrane type-1 1 domain. Residue asparagine 309 is glycosylated (N-linked (GlcNAc...) asparagine). The next 5 helical transmembrane spans lie at isoleucine 314–glycine 334, tryptophan 387–leucine 407, leucine 411–isoleucine 431, leucine 501–methionine 521, and leucine 541–glycine 561. The ABC transporter 1 domain occupies leucine 626–leucine 853. N-linked (GlcNAc...) asparagine glycosylation occurs at asparagine 630. Residue glycine 660 to serine 667 coordinates ATP. Asparagine 702, asparagine 804, and asparagine 879 each carry an N-linked (GlcNAc...) asparagine glycan. Residues proline 933 to threonine 1182 enclose the ABC transmembrane type-1 2 domain. 6 consecutive transmembrane segments (helical) span residues tyrosine 940–tryptophan 960, leucine 978–isoleucine 998, alanine 1016–isoleucine 1036, tyrosine 1040–leucine 1060, leucine 1125–valine 1145, and valine 1156–phenylalanine 1176. The region spanning isoleucine 1219 to alanine 1449 is the ABC transporter 2 domain. Residue glycine 1252–threonine 1259 coordinates ATP. A glycan (N-linked (GlcNAc...) asparagine) is linked at asparagine 1316.

This sequence belongs to the ABC transporter superfamily. ABCC family. Conjugate transporter (TC 3.A.1.208) subfamily.

It localises to the cell membrane. Functionally, pleiotropic ABC efflux transporter that may be involved in A.fumigatus adaptation to azoles such as vorizonazole. The sequence is that of ABC multidrug transporter B from Aspergillus fumigatus (strain ATCC MYA-4609 / CBS 101355 / FGSC A1100 / Af293) (Neosartorya fumigata).